A 664-amino-acid polypeptide reads, in one-letter code: MARVLLTCFFILISSHLGKSSGVFELKVLSFTSTSSVCKGSSDCQIFFRVCLKHSQALILPEPPCTYGTGMSEILSADSISSSAYISVPFNFKWPGIVSLIIETWNAETSDQSTENNNNMISRLATKRRLAISEDWSQDVHLGRQSQLRFSYRVVCDEFYHGEECSDFCRPRNDTFGHFNCDAAGNRICLPGWKGDYCTEPICLSGCSEENGYCEAPGECKCRIGWEGPLCDECTRHPGCLHGTCNQPFQCTCKEGWGGLFCNEDLNFCTNHKPCRNDATCTNTGQGSYTCICKPGFSGKNCEIETNECDSNPCKNGGSCNDQENDYTCTCPQGFYGKNCEVSAMTCADGPCFNGGTCMEKGSGSYSCRCPPGYMGSNCEKKIDRCSSDPCANGGQCLDLGNKATCRCRPGFTGSRCETNIDDCSSNPCQNAGTCVDGINGYTCTCTLGFSGKDCRVRSDACSFMPCQNGGTCYTHFSGPVCQCPAGFMGTQCEYKQKPTPVNSPALPAALIVSFTLGLITLTLVICAAIVVLRQMRQNHKASSTTVRNNLDSVNNRISLSPTSPLGREKEAFLIPGGPFKVSNKDMALRSTSVDTHSSDKSNYKQKMVDYNLSIDEKHTNNKLEKNSESTLLVPPLNYPKEGVYHPVYIIPEHIEQRVFATEV.

The N-terminal stretch at 1 to 20 (MARVLLTCFFILISSHLGKS) is a signal peptide. The Extracellular portion of the chain corresponds to 21–511 (SGVFELKVLS…VNSPALPAAL (491 aa)). Residues 154–198 (VVCDEFYHGEECSDFCRPRNDTFGHFNCDAAGNRICLPGWKGDYC) form the DSL domain. Disulfide bonds link C156–C165, C169–C181, C189–C198, C203–C214, C207–C220, C222–C231, C234–C245, C240–C251, C253–C262, C269–C281, C275–C291, C293–C302, C309–C320, C314–C329, C331–C340, C347–C358, C352–C368, C370–C379, C386–C397, C391–C406, C408–C417, C424–C435, C429–C444, C446–C455, C462–C473, C467–C482, and C484–C493. N173 is a glycosylation site (N-linked (GlcNAc...) asparagine). EGF-like domains lie at 199–232 (TEPICLSGCSEENGYCEAPGECKCRIGWEGPLCD), 233–263 (ECTRHPGCLHGTCNQPFQCTCKEGWGGLFCN), and 265–303 (DLNFCTNHKPCRNDATCTNTGQGSYTCICKPGFSGKNCE). The 37-residue stretch at 305-341 (ETNECDSNPCKNGGSCNDQENDYTCTCPQGFYGKNCE) folds into the EGF-like 4; calcium-binding domain. EGF-like domains are found at residues 343–380 (SAMTCADGPCFNGGTCMEKGSGSYSCRCPPGYMGSNCE) and 382–418 (KIDRCSSDPCANGGQCLDLGNKATCRCRPGFTGSRCE). The region spanning 420-456 (NIDDCSSNPCQNAGTCVDGINGYTCTCTLGFSGKDCR) is the EGF-like 7; calcium-binding domain. Positions 458–494 (RSDACSFMPCQNGGTCYTHFSGPVCQCPAGFMGTQCE) constitute an EGF-like 8 domain. The chain crosses the membrane as a helical span at residues 512–532 (IVSFTLGLITLTLVICAAIVV). At 533-664 (LRQMRQNHKA…IEQRVFATEV (132 aa)) the chain is on the cytoplasmic side.

Post-translationally, ubiquitinated by mib, leading to its endocytosis and subsequent degradation. As to expression, strongly expressed in the early retina, where it precedes other delta proteins. Also expressed in cranial ganglia, in sensory epithelia including ear and lateral line and in scattered epidermal cells. In the mesoderm, expression is visible by 50% epiboly; it is expressed subsequently in the tail bud, in stripes in the presomitic mesoderm and in the posterior half of each somite. Also expressed in notochord, blood vessels and pronephros. In contrast to other delta proteins, it is not expressed in the majority of nascent primary neurons. In somites, it marks the posterior part of each formed somite, while deltaD (dld) marks the anterior part.

It is found in the membrane. Functionally, acts as a ligand for Notch receptors and is involved in somitogenesis. Can activate Notch receptors. Required in somite segmentation to keep the oscillations of neighboring presomitic mesoderm cells synchronized. The polypeptide is Delta-like protein C (dlc) (Danio rerio (Zebrafish)).